The chain runs to 204 residues: 3,4-dihydroxy-2-butanone 4-phosphate synthase (204 aa).

Glu-30 provides a ligand contact to Mg(2+). Asp-34 contacts D-ribulose 5-phosphate. Position 59 is an S-glutathionyl cysteine (Cys-59). D-ribulose 5-phosphate contacts are provided by residues Thr-85 and 142–146 (RRGHT). His-145 serves as a coordination point for Mg(2+).

Homodimer. The cofactor is Mg(2+). Requires Mn(2+) as cofactor. Post-translationally, S-glutathionylation is reversible and dependent on a glutaredoxin.

It catalyses the reaction D-ribulose 5-phosphate = (2S)-2-hydroxy-3-oxobutyl phosphate + formate + H(+). It functions in the pathway cofactor biosynthesis; riboflavin biosynthesis; 2-hydroxy-3-oxobutyl phosphate from D-ribulose 5-phosphate: step 1/1. Catalyzes the conversion of D-ribulose 5-phosphate to formate and 3,4-dihydroxy-2-butanone 4-phosphate. The polypeptide is 3,4-dihydroxy-2-butanone 4-phosphate synthase (RIB3) (Candida albicans (strain SC5314 / ATCC MYA-2876) (Yeast)).